The following is a 212-amino-acid chain: 3-isopropylmalate dehydratase small subunit (212 aa).

This sequence belongs to the LeuD family. LeuD type 1 subfamily. As to quaternary structure, heterodimer of LeuC and LeuD.

It carries out the reaction (2R,3S)-3-isopropylmalate = (2S)-2-isopropylmalate. The protein operates within amino-acid biosynthesis; L-leucine biosynthesis; L-leucine from 3-methyl-2-oxobutanoate: step 2/4. Functionally, catalyzes the isomerization between 2-isopropylmalate and 3-isopropylmalate, via the formation of 2-isopropylmaleate. The protein is 3-isopropylmalate dehydratase small subunit of Thiobacillus denitrificans (strain ATCC 25259 / T1).